Consider the following 468-residue polypeptide: POC1 centriolar protein homolog B (468 aa).

7 WD repeats span residues 16–55 (GHKD…RAYK), 58–97 (GHKE…ESTV), 100–139 (AHTA…FLFS), 142–181 (QHTN…CINT), 184–223 (DYKG…LLQH), 226–265 (VHNA…LIYT), and 268–307 (GHQG…YSVK). Positions 420–459 (NTLEQIVDQLNVLTQTVSILEHRLTLTEDKLKECLENQQK) form a coiled coil.

It belongs to the WD repeat POC1 family. As to quaternary structure, interacts with pat. Highly expressed in ovary and, at low levels, in testis.

The protein resides in the cytoplasm. Its subcellular location is the cytoskeleton. It is found in the microtubule organizing center. The protein localises to the centrosome. It localises to the centriole. Functionally, plays an important role in centriole assembly and/or stability and ciliogenesis. Involved in early steps of centriole duplication, as well as in the later steps of centriole length control. This is POC1 centriolar protein homolog B (poc1b) from Xenopus laevis (African clawed frog).